The primary structure comprises 309 residues: Malate dehydrogenase (309 aa).

NAD(+)-binding positions include 10–15 (GAGNVG) and Asp34. Substrate-binding residues include Arg83 and Arg89. Residues Asn96 and 119–121 (VTN) each bind NAD(+). Residues Asn121 and Arg152 each coordinate substrate. His176 serves as the catalytic Proton acceptor.

The protein belongs to the LDH/MDH superfamily. MDH type 3 family.

It carries out the reaction (S)-malate + NAD(+) = oxaloacetate + NADH + H(+). Its function is as follows. Catalyzes the reversible oxidation of malate to oxaloacetate. This is Malate dehydrogenase from Desulforudis audaxviator (strain MP104C).